Reading from the N-terminus, the 373-residue chain is Flagellar P-ring protein 1 (373 aa).

An N-terminal signal peptide occupies residues 1–25 (MKPINTFFSSFLLALTLGLPATSQA).

The protein belongs to the FlgI family. The basal body constitutes a major portion of the flagellar organelle and consists of four rings (L,P,S, and M) mounted on a central rod.

The protein localises to the periplasm. The protein resides in the bacterial flagellum basal body. Assembles around the rod to form the L-ring and probably protects the motor/basal body from shearing forces during rotation. The polypeptide is Flagellar P-ring protein 1 (Vibrio parahaemolyticus serotype O3:K6 (strain RIMD 2210633)).